We begin with the raw amino-acid sequence, 283 residues long: MAEHLASIFGTEKDRVNCPFYFKIGACRHGDRCSRLHNRPTISPTLLLSNMYQRPDMITPGVDPQGQPLDPSKIQDHFEDFYEDIFEELNKFGEVESLNVCDNLADHMIGNVYVLFKEEDHAAAALQALQGRFYSGRPIIADFSPVTDFREATCRQYEENSCNRGGYCNFMHVKQISRELRRKLFGRYRRSYRRGSRSRSRSISPRRKREHSRERERGDVRDRDRHGNGKRSSDRSERHDRDGGGRRRHGSPKRSRSPRNVREGSEERRARIEQWNRERDEGV.

A C3H1-type 1 zinc finger spans residues 12–40; the sequence is EKDRVNCPFYFKIGACRHGDRCSRLHNRP. Residues 44–146 enclose the RRM domain; the sequence is PTLLLSNMYQ…RPIIADFSPV (103 aa). Residues 148-175 form a C3H1-type 2 zinc finger; the sequence is DFREATCRQYEENSCNRGGYCNFMHVKQ. Positions 191–210 are enriched in basic residues; the sequence is SYRRGSRSRSRSISPRRKRE. Positions 191–283 are disordered; it reads SYRRGSRSRS…QWNRERDEGV (93 aa). Positions 211–245 are enriched in basic and acidic residues; that stretch reads HSRERERGDVRDRDRHGNGKRSSDRSERHDRDGGG. Residues 246-259 are compositionally biased toward basic residues; sequence RRRHGSPKRSRSPR. The segment covering 260–283 has biased composition (basic and acidic residues); that stretch reads NVREGSEERRARIEQWNRERDEGV.

Belongs to the splicing factor SR family. Component of the spliceosome. Homo- and heterodimer. Interacts with RNU1, U2AF35A and SR45.

It is found in the nucleus speckle. Its function is as follows. Necessary for the splicing of pre-mRNA. Probably active at the 3' splice sites. In Arabidopsis thaliana (Mouse-ear cress), this protein is Splicing factor U2af small subunit B (U2AF35B).